We begin with the raw amino-acid sequence, 346 residues long: Small glutamine-rich tetratricopeptide repeat-containing protein 2 (346 aa).

TPR repeat units lie at residues 102-135 (AEDLKMQGNKAMANKDYELAINKYTEAIKVLPTN), 136-169 (AIYYANRAAAHSSLKEYDQAVKDAESAISIDPSY), 170-203 (FRGYSRLGFAKYAQGKPEEALEAYKKVLDIEGDN), and 205-229 (TEAMKRDYESAKKKVEQSLNLEKTV). The segment at 219–249 (VEQSLNLEKTVPEQSRDADVDASQGASAGGL) is disordered. Positions 228–237 (TVPEQSRDAD) are enriched in basic and acidic residues. Position 308 is a phosphothreonine (Thr308). The interval 325 to 346 (GNLFGGAGAQSTDETPDNENKQ) is disordered.

Belongs to the SGT family. As to quaternary structure, interacts with HSC82, HSP104, MDY2, SSA1 and SSA2.

Its subcellular location is the cytoplasm. Co-chaperone that binds to the molecular chaperone Hsp70 (SSA1 and SSA2). Regulates Hsp70 ATPase activity. Required for recovery from heat shock. The sequence is that of Small glutamine-rich tetratricopeptide repeat-containing protein 2 (SGT2) from Saccharomyces cerevisiae (strain ATCC 204508 / S288c) (Baker's yeast).